Reading from the N-terminus, the 126-residue chain is Small ribosomal subunit protein bS16 (126 aa).

The segment at 87–126 is disordered; that stretch reads ARSNPEKALPGKRALERVAEKKQKAEDAAAAAAAEASAAE. A compositionally biased stretch (basic and acidic residues) spans 99–113; that stretch reads RALERVAEKKQKAED. A compositionally biased stretch (low complexity) spans 114–126; that stretch reads AAAAAAAEASAAE.

Belongs to the bacterial ribosomal protein bS16 family.

This chain is Small ribosomal subunit protein bS16, found in Agrobacterium fabrum (strain C58 / ATCC 33970) (Agrobacterium tumefaciens (strain C58)).